Consider the following 108-residue polypeptide: Glutaredoxin 4 (108 aa).

Positions 5-107 (IKKIQNQIQN…KTISICDKLN (103 aa)) constitute a Glutaredoxin domain. Lysine 22 is a binding site for glutathione. Residue cysteine 30 participates in [2Fe-2S] cluster binding. Glutathione is bound by residues arginine 59, phenylalanine 71, and 84–85 (CN).

The protein belongs to the glutaredoxin family. Monothiol subfamily. Homodimer.

It localises to the cytoplasm. In terms of biological role, monothiol glutaredoxin involved in the biogenesis of iron-sulfur clusters. This is Glutaredoxin 4 (grxD) from Buchnera aphidicola subsp. Baizongia pistaciae (strain Bp).